A 217-amino-acid chain; its full sequence is GrpE protein homolog 1, mitochondrial (217 aa).

The transit peptide at 1-27 directs the protein to the mitochondrion; that stretch reads MAAQCVRLARRSLPALALSLRPSPRLL. The disordered stretch occupies residues 29–56; it reads TATKQKNSGQNLEEDMGQSEQKADPPAT. A compositionally biased stretch (polar residues) spans 30 to 39; it reads ATKQKNSGQN. Lys-94 is subject to N6-acetyllysine; alternate. Lys-94 bears the N6-succinyllysine; alternate mark. The residue at position 100 (Lys-100) is an N6-acetyllysine. An N6-succinyllysine modification is found at Lys-120. The residue at position 215 (Lys-215) is an N6-acetyllysine; alternate. The residue at position 215 (Lys-215) is an N6-succinyllysine; alternate.

This sequence belongs to the GrpE family. As to quaternary structure, probable component of the PAM complex at least composed of a mitochondrial HSP70 protein, GRPEL1 or GRPEL2, TIMM44, TIMM16/PAM16 and TIMM14/DNAJC19. Binds to HSP70, HSC70 and HSJ1B.

It is found in the mitochondrion matrix. In terms of biological role, essential component of the PAM complex, a complex required for the translocation of transit peptide-containing proteins from the inner membrane into the mitochondrial matrix in an ATP-dependent manner. Seems to control the nucleotide-dependent binding of mitochondrial HSP70 to substrate proteins. The polypeptide is GrpE protein homolog 1, mitochondrial (GRPEL1) (Homo sapiens (Human)).